A 1295-amino-acid chain; its full sequence is Phosphoribosylformylglycinamidine synthase (1295 aa).

A disordered region spans residues 305–327 (WPGAATGSGGEIRDEGATGRGAK). ATP-binding positions include 307–318 (GAATGSGGEIRD) and Ala-678. Glu-718, Asn-722, and Asp-884 together coordinate Mg(2+). Ser-886 provides a ligand contact to ATP. The region spanning 1042–1295 (VAVLREQGVN…IFRNARKQLG (254 aa)) is the Glutamine amidotransferase type-1 domain. Cys-1135 acts as the Nucleophile in catalysis. Residues His-1260 and Glu-1262 contribute to the active site.

This sequence in the N-terminal section; belongs to the FGAMS family. Monomer.

The protein localises to the cytoplasm. It carries out the reaction N(2)-formyl-N(1)-(5-phospho-beta-D-ribosyl)glycinamide + L-glutamine + ATP + H2O = 2-formamido-N(1)-(5-O-phospho-beta-D-ribosyl)acetamidine + L-glutamate + ADP + phosphate + H(+). Its pathway is purine metabolism; IMP biosynthesis via de novo pathway; 5-amino-1-(5-phospho-D-ribosyl)imidazole from N(2)-formyl-N(1)-(5-phospho-D-ribosyl)glycinamide: step 1/2. In terms of biological role, phosphoribosylformylglycinamidine synthase involved in the purines biosynthetic pathway. Catalyzes the ATP-dependent conversion of formylglycinamide ribonucleotide (FGAR) and glutamine to yield formylglycinamidine ribonucleotide (FGAM) and glutamate. This chain is Phosphoribosylformylglycinamidine synthase, found in Shigella boydii serotype 4 (strain Sb227).